The sequence spans 450 residues: Casein kinase 1-like protein 1 (450 aa).

Positions 9 to 278 (FRLGRKIGSG…LKRIFRDLFI (270 aa)) constitute a Protein kinase domain. ATP-binding positions include 15–23 (IGSGSFGEI) and K38. D128 (proton acceptor) is an active-site residue. A disordered region spans residues 311–450 (AVGTSAALPP…LQVSDEHHPH (140 aa)). The span at 328-342 (YTGEEEGRPHMESSR) shows a compositional bias: basic and acidic residues. Over residues 349–365 (LDNSGNISNQPTSSSAR) the composition is skewed to polar residues. Low complexity predominate over residues 371 to 382 (SSSLFAQSAGSS).

The protein belongs to the protein kinase superfamily. CK1 Ser/Thr protein kinase family. Casein kinase I subfamily. As to quaternary structure, monomer. Post-translationally, autophosphorylated. As to expression, expressed in flowers.

It is found in the cytoplasm. Its subcellular location is the cell junction. The protein resides in the plasmodesma. The catalysed reaction is L-seryl-[protein] + ATP = O-phospho-L-seryl-[protein] + ADP + H(+). It carries out the reaction L-threonyl-[protein] + ATP = O-phospho-L-threonyl-[protein] + ADP + H(+). Its function is as follows. Casein kinases are operationally defined by their preferential utilization of acidic proteins such as caseins as substrates. It can phosphorylate a large number of proteins. This is Casein kinase 1-like protein 1 from Arabidopsis thaliana (Mouse-ear cress).